Consider the following 71-residue polypeptide: Exodeoxyribonuclease 7 small subunit (71 aa).

It belongs to the XseB family. In terms of assembly, heterooligomer composed of large and small subunits.

It is found in the cytoplasm. The enzyme catalyses Exonucleolytic cleavage in either 5'- to 3'- or 3'- to 5'-direction to yield nucleoside 5'-phosphates.. Functionally, bidirectionally degrades single-stranded DNA into large acid-insoluble oligonucleotides, which are then degraded further into small acid-soluble oligonucleotides. This Streptococcus thermophilus (strain ATCC BAA-250 / LMG 18311) protein is Exodeoxyribonuclease 7 small subunit.